The sequence spans 760 residues: MTKQVLPLIEKIPQSIVGFLESSSYHWSSSLSKTTQAHARILKSGAQNDGYISAKLIASYSNYNCFNDADLVLQSIPDPTIYSFSSLIYALTKAKLFTQSIGVFSRMFSHGLIPDSHVLPNLFKVCAELSAFKVGKQIHCVSCVSGLDMDAFVQGSMFHMYMRCGRMGDARKVFDRMSDKDVVTCSALLCAYARKGCLEEVVRILSEMESSGIEANIVSWNGILSGFNRSGYHKEAVVMFQKIHHLGFCPDQVTVSSVLPSVGDSEMLNMGRLIHGYVIKQGLLKDKCVISAMIDMYGKSGHVYGIISLFNQFEMMEAGVCNAYITGLSRNGLVDKALEMFELFKEQTMELNVVSWTSIIAGCAQNGKDIEALELFREMQVAGVKPNHVTIPSMLPACGNIAALGHGRSTHGFAVRVHLLDNVHVGSALIDMYAKCGRINLSQIVFNMMPTKNLVCWNSLMNGFSMHGKAKEVMSIFESLMRTRLKPDFISFTSLLSACGQVGLTDEGWKYFKMMSEEYGIKPRLEHYSCMVNLLGRAGKLQEAYDLIKEMPFEPDSCVWGALLNSCRLQNNVDLAEIAAEKLFHLEPENPGTYVLLSNIYAAKGMWTEVDSIRNKMESLGLKKNPGCSWIQVKNRVYTLLAGDKSHPQIDQITEKMDEISKEMRKSGHRPNLDFALHDVEEQEQEQMLWGHSEKLAVVFGLLNTPDGTPLQVIKNLRICGDCHAVIKFISSYAGREIFIRDTNRFHHFKDGICSCGDFW.

PPR repeat units follow at residues Asp49 to Pro79, Thr80 to Pro114, Asp115 to Met149, Asp150 to Lys180, Asp181 to Ala215, Asn216 to Pro250, Asp251 to Lys285, Asp286 to Met316, Glu317 to Leu351, Asn352 to Pro386, Asn387 to Asp421, Asn422 to Lys452, Asn453 to Pro487, Asp488 to Pro523, and Arg524 to Glu554. The type E motif stretch occupies residues Val559 to Lys634. The segment at Asn635 to Arg665 is type E(+) motif. Positions Lys666–Trp760 are type DYW motif.

Belongs to the PPR family. PCMP-H subfamily.

The protein is Pentatricopeptide repeat-containing protein At1g20230 (PCMP-H21) of Arabidopsis thaliana (Mouse-ear cress).